Reading from the N-terminus, the 350-residue chain is Arginine N-succinyltransferase (350 aa).

Residue L125 participates in succinyl-CoA binding. The active-site Proton donor is the H229.

Belongs to the arginine N-succinyltransferase family.

It carries out the reaction succinyl-CoA + L-arginine = N(2)-succinyl-L-arginine + CoA + H(+). Its pathway is amino-acid degradation; L-arginine degradation via AST pathway; L-glutamate and succinate from L-arginine: step 1/5. Its function is as follows. Catalyzes the transfer of succinyl-CoA to arginine to produce N(2)-succinylarginine. The chain is Arginine N-succinyltransferase from Yersinia pseudotuberculosis serotype IB (strain PB1/+).